Here is a 31-residue protein sequence, read N- to C-terminus: Photosystem II reaction center protein M (31 aa).

The helical transmembrane segment at 5 to 25 (ILAFIATALLILVPTAFLLII) threads the bilayer.

It belongs to the PsbM family. In terms of assembly, PSII is composed of 1 copy each of membrane proteins PsbA, PsbB, PsbC, PsbD, PsbE, PsbF, PsbH, PsbI, PsbJ, PsbK, PsbL, PsbM, PsbT, PsbX, PsbY, PsbZ, Psb30/Ycf12, at least 3 peripheral proteins of the oxygen-evolving complex and a large number of cofactors. It forms dimeric complexes.

Its subcellular location is the plastid membrane. In terms of biological role, one of the components of the core complex of photosystem II (PSII). PSII is a light-driven water:plastoquinone oxidoreductase that uses light energy to abstract electrons from H(2)O, generating O(2) and a proton gradient subsequently used for ATP formation. It consists of a core antenna complex that captures photons, and an electron transfer chain that converts photonic excitation into a charge separation. This subunit is found at the monomer-monomer interface. This chain is Photosystem II reaction center protein M, found in Cuscuta exaltata (Tall dodder).